The chain runs to 365 residues: MNAQTHTVLDLVRQELRSFAGYSSARSVALTGDLWLNANESAWPNPADSHATMRRYPEPQPPKLRQMLAALYGCLPEQVLIGRGSDEGIDLLVRAVCEPRRDPVLVTPPVFGMYAVSAQLQNAPLIQVPLVDDAAGFHADVPAIITAAQTSRAKLVFLCSPSNPVGAAIPLQQIETILQTLAGTALVVVDEAYGEFSDVPSVVPLLARYPHLVVLRTLSKAHALAAVRIGSVIADAHLVAVLRRCQAPYPLPTPCVSLAEQGLSAAALHVTAQRVAEIRAERERLRAALACLSGVRRVYPSQGNFLLVRFDDAEAAFQALYAAGVVVRDQRAAPQLHDALRLTVGTPEQNTRLLAVLRDIQAVPA.

At Lys220 the chain carries N6-(pyridoxal phosphate)lysine.

The protein belongs to the class-II pyridoxal-phosphate-dependent aminotransferase family. Histidinol-phosphate aminotransferase subfamily. As to quaternary structure, homodimer. It depends on pyridoxal 5'-phosphate as a cofactor.

It carries out the reaction L-histidinol phosphate + 2-oxoglutarate = 3-(imidazol-4-yl)-2-oxopropyl phosphate + L-glutamate. The protein operates within amino-acid biosynthesis; L-histidine biosynthesis; L-histidine from 5-phospho-alpha-D-ribose 1-diphosphate: step 7/9. This Xylella fastidiosa (strain Temecula1 / ATCC 700964) protein is Histidinol-phosphate aminotransferase (hisC).